A 163-amino-acid polypeptide reads, in one-letter code: Thiol peroxidase (163 aa).

Residues 16–162 (LQVGDTAHDF…YDAAIAAVKN (147 aa)) form the Thioredoxin domain. C58 acts as the Cysteine sulfenic acid (-SOH) intermediate in catalysis. A disulfide bond links C58 and C92.

This sequence belongs to the peroxiredoxin family. Tpx subfamily. Homodimer.

It catalyses the reaction a hydroperoxide + [thioredoxin]-dithiol = an alcohol + [thioredoxin]-disulfide + H2O. Thiol-specific peroxidase that catalyzes the reduction of hydrogen peroxide and organic hydroperoxides to water and alcohols, respectively. Plays a role in cell protection against oxidative stress by detoxifying peroxides. This Streptococcus gordonii protein is Thiol peroxidase.